The sequence spans 186 residues: NADH-quinone oxidoreductase subunit C (186 aa).

Residues 166–186 (DSLTPWKGVGRPSDPFDGRKE) form a disordered region.

This sequence belongs to the complex I 30 kDa subunit family. As to quaternary structure, NDH-1 is composed of 14 different subunits. Subunits NuoB, C, D, E, F, and G constitute the peripheral sector of the complex.

The protein resides in the cell inner membrane. It catalyses the reaction a quinone + NADH + 5 H(+)(in) = a quinol + NAD(+) + 4 H(+)(out). NDH-1 shuttles electrons from NADH, via FMN and iron-sulfur (Fe-S) centers, to quinones in the respiratory chain. The immediate electron acceptor for the enzyme in this species is believed to be ubiquinone. Couples the redox reaction to proton translocation (for every two electrons transferred, four hydrogen ions are translocated across the cytoplasmic membrane), and thus conserves the redox energy in a proton gradient. The sequence is that of NADH-quinone oxidoreductase subunit C from Neorickettsia sennetsu (strain ATCC VR-367 / Miyayama) (Ehrlichia sennetsu).